The primary structure comprises 442 residues: 3-phosphoshikimate 1-carboxyvinyltransferase (442 aa).

K25, S26, and R30 together coordinate 3-phosphoshikimate. A phosphoenolpyruvate-binding site is contributed by K25. Positions 97 and 125 each coordinate phosphoenolpyruvate. The 3-phosphoshikimate site is built by S170, S171, Q172, D323, and K350. Phosphoenolpyruvate is bound at residue Q172. D323 (proton acceptor) is an active-site residue. Phosphoenolpyruvate is bound by residues R354 and R399.

Belongs to the EPSP synthase family. As to quaternary structure, monomer.

The protein localises to the cytoplasm. The catalysed reaction is 3-phosphoshikimate + phosphoenolpyruvate = 5-O-(1-carboxyvinyl)-3-phosphoshikimate + phosphate. The protein operates within metabolic intermediate biosynthesis; chorismate biosynthesis; chorismate from D-erythrose 4-phosphate and phosphoenolpyruvate: step 6/7. Catalyzes the transfer of the enolpyruvyl moiety of phosphoenolpyruvate (PEP) to the 5-hydroxyl of shikimate-3-phosphate (S3P) to produce enolpyruvyl shikimate-3-phosphate and inorganic phosphate. This chain is 3-phosphoshikimate 1-carboxyvinyltransferase, found in Bartonella tribocorum (strain CIP 105476 / IBS 506).